Consider the following 254-residue polypeptide: rRNA N-glycosylase sapovaccarin-S1 (254 aa).

Belongs to the ribosome-inactivating protein family. Type 1 RIP subfamily. In terms of tissue distribution, expressed in seeds; most abundant in the perisperm.

It carries out the reaction Endohydrolysis of the N-glycosidic bond at one specific adenosine on the 28S rRNA.. In terms of biological role, exhibits N-glycosylase activity. Catalyzes the release of one adenine from a ribosome. Acts as a ribosome-inactivating protein and inhibits protein synthesis in a rabbit-reticulocyte lysate system and in various cell lines (in vitro). Induces cell death in Huh-7 liver cells. May contribute to the protection against plant pests and predators or play a role in regulating the death of plant cells. The chain is rRNA N-glycosylase sapovaccarin-S1 from Gypsophila vaccaria (Cow soapwort).